The sequence spans 278 residues: Alcohol dehydrogenase-related 31 kDa protein (278 aa).

Tyr11–Leu34 contributes to the NAD(+) binding site. Residue Ser139 participates in substrate binding. The Proton acceptor role is filled by Tyr152.

It belongs to the short-chain dehydrogenases/reductases (SDR) family.

In Drosophila persimilis (Fruit fly), this protein is Alcohol dehydrogenase-related 31 kDa protein (Adhr).